The chain runs to 302 residues: uncharacterized protein (302 aa).

The next 9 helical transmembrane spans lie at 10 to 30 (VLSV…GVLG), 65 to 85 (LVLI…IAYL), 102 to 122 (VAAA…GIFG), 130 to 150 (IFYD…LSHI), 162 to 182 (AVFF…LWGL), 190 to 210 (ILGY…GLTL), 224 to 244 (LVSG…SYVL), 251 to 271 (FSVT…VLAI), and 282 to 302 (SCIF…SVVL).

This sequence belongs to the auxin efflux carrier (TC 2.A.69) family.

It is found in the cell membrane. This is an uncharacterized protein from Methanothermobacter thermautotrophicus (strain ATCC 29096 / DSM 1053 / JCM 10044 / NBRC 100330 / Delta H) (Methanobacterium thermoautotrophicum).